The chain runs to 142 residues: Large ribosomal subunit protein uL11 (142 aa).

The protein belongs to the universal ribosomal protein uL11 family. As to quaternary structure, part of the ribosomal stalk of the 50S ribosomal subunit. Interacts with L10 and the large rRNA to form the base of the stalk. L10 forms an elongated spine to which L12 dimers bind in a sequential fashion forming a multimeric L10(L12)X complex. One or more lysine residues are methylated.

Forms part of the ribosomal stalk which helps the ribosome interact with GTP-bound translation factors. In Leptospira interrogans serogroup Icterohaemorrhagiae serovar copenhageni (strain Fiocruz L1-130), this protein is Large ribosomal subunit protein uL11.